A 481-amino-acid polypeptide reads, in one-letter code: 3-isopropylmalate dehydratase large subunit (481 aa).

3 residues coordinate [4Fe-4S] cluster: cysteine 363, cysteine 423, and cysteine 426. Positions 434–465 are disordered; it reads LRPGQRAASTSNRNFEGRQGRGGRTHLVSPPV.

Belongs to the aconitase/IPM isomerase family. LeuC type 1 subfamily. In terms of assembly, heterodimer of LeuC and LeuD. [4Fe-4S] cluster serves as cofactor.

The catalysed reaction is (2R,3S)-3-isopropylmalate = (2S)-2-isopropylmalate. It participates in amino-acid biosynthesis; L-leucine biosynthesis; L-leucine from 3-methyl-2-oxobutanoate: step 2/4. Its function is as follows. Catalyzes the isomerization between 2-isopropylmalate and 3-isopropylmalate, via the formation of 2-isopropylmaleate. The chain is 3-isopropylmalate dehydratase large subunit from Salinispora tropica (strain ATCC BAA-916 / DSM 44818 / JCM 13857 / NBRC 105044 / CNB-440).